A 323-amino-acid polypeptide reads, in one-letter code: tRNA U34 carboxymethyltransferase (323 aa).

Residues K91, W105, K110, G130, 152–154 (DPT), 181–182 (IE), M196, Y200, and R315 each bind carboxy-S-adenosyl-L-methionine.

This sequence belongs to the class I-like SAM-binding methyltransferase superfamily. CmoB family. In terms of assembly, homotetramer.

The catalysed reaction is carboxy-S-adenosyl-L-methionine + 5-hydroxyuridine(34) in tRNA = 5-carboxymethoxyuridine(34) in tRNA + S-adenosyl-L-homocysteine + H(+). Its function is as follows. Catalyzes carboxymethyl transfer from carboxy-S-adenosyl-L-methionine (Cx-SAM) to 5-hydroxyuridine (ho5U) to form 5-carboxymethoxyuridine (cmo5U) at position 34 in tRNAs. This is tRNA U34 carboxymethyltransferase from Escherichia coli O157:H7.